The chain runs to 378 residues: Uroporphyrinogen decarboxylase (378 aa).

Substrate contacts are provided by residues 40–44 (RQAGR), Asp-90, Tyr-167, Ser-222, and His-355.

The protein belongs to the uroporphyrinogen decarboxylase family. In terms of assembly, homodimer.

The protein localises to the cytoplasm. It carries out the reaction uroporphyrinogen III + 4 H(+) = coproporphyrinogen III + 4 CO2. The protein operates within porphyrin-containing compound metabolism; protoporphyrin-IX biosynthesis; coproporphyrinogen-III from 5-aminolevulinate: step 4/4. Its function is as follows. Catalyzes the decarboxylation of four acetate groups of uroporphyrinogen-III to yield coproporphyrinogen-III. This chain is Uroporphyrinogen decarboxylase, found in Psychrobacter arcticus (strain DSM 17307 / VKM B-2377 / 273-4).